The sequence spans 420 residues: MMINIPRGTQDILPAETAKWRYVESKLHNIAANYNYKEIRTPMFESTDLFARGVGGSTDIVQKEMYTFKDKGDRSLTLRPEGTAAVVRSYIENKMNGDANQPVKLYYNGPMFRYERKQKGRYRQFVQFGVEAIGSENPAIDAEVIHMVYNIYKSFGLKHIKIVLNSIGDMDSREEYKQALIEHFEPHINNFCNDCKNRLHTNPMRILDCKVDHEQPTVKTAPKITEYLNDYSKNYYEEVKQYLDLLNIPYIEDASLVRGLDYYTHTAFEVMSEAEGFGAITTLCGGGRYNGLLEMLDGPKETGIGFALSIERLLLAIEAEDIQLDVEESVDIFVVTMPETVKEAVKIVAELRNAGIRCDMDYLGRKMKGQMKQADRIHATYTVVLGSNEIETNKIQIKAMQTGESETIKLQDIASYIKGE.

Belongs to the class-II aminoacyl-tRNA synthetase family. In terms of assembly, homodimer.

The protein resides in the cytoplasm. It catalyses the reaction tRNA(His) + L-histidine + ATP = L-histidyl-tRNA(His) + AMP + diphosphate + H(+). The protein is Histidine--tRNA ligase of Macrococcus caseolyticus (strain JCSC5402) (Macrococcoides caseolyticum).